A 376-amino-acid polypeptide reads, in one-letter code: MSEQFQMTRRSMLAGAAIAGAVTPLIGAVSAHAEEAVAKTAHINVASLPRVKVDLVKPPFVHAHTQKAEGGPKVVEFTLTIEEKKIVIDEQGTELHAMTFNGSVPGPLMVVHQDDYVELTLINPDTNTLQHNIDFHSATGALGGGALTVVNPGDTTVLRFKASKAGVFVYHCAPPGMVPWHVTSGMNGAIMVLPREGLTDGKGNSITYDKVYYVGEQDFYVPRDANGKFKKYESVGEAYADTLEVMRTLTPSHIVFNGAVGALTGDSALKAAVGEKVLIVHSQANRDTRPHLIGGHGDYVWATGKFRNAPDVDQETWFIPGGTAGAAFYTFEQPGIYAYVNHNLIEAFELGAAAHFAVTGDWNDDLMTSVRAPSGT.

The segment at residues Met-1–Ala-33 is a signal peptide (tat-type signal). Plastocyanin-like domains follow at residues Met-98 to Leu-193 and Gly-258 to Thr-359. 7 residues coordinate Cu cation: His-131, His-136, His-171, Cys-172, His-181, Met-186, and His-342.

This sequence belongs to the multicopper oxidase family. Homotrimer. Requires Cu(2+) as cofactor. Cu(+) is required as a cofactor. The cofactor is FAD. In terms of processing, predicted to be exported by the Tat system. The position of the signal peptide cleavage has not been experimentally proven.

It is found in the periplasm. It carries out the reaction nitric oxide + Fe(III)-[cytochrome c] + H2O = Fe(II)-[cytochrome c] + nitrite + 2 H(+). The protein operates within nitrogen metabolism; nitrate reduction (denitrification); dinitrogen from nitrate: step 2/4. The sequence is that of Copper-containing nitrite reductase (nirK) from Rhizobium meliloti (strain 1021) (Ensifer meliloti).